Here is a 1070-residue protein sequence, read N- to C-terminus: DNA-directed RNA polymerase subunit beta (1070 aa).

The protein belongs to the RNA polymerase beta chain family. In terms of assembly, in plastids the minimal PEP RNA polymerase catalytic core is composed of four subunits: alpha, beta, beta', and beta''. When a (nuclear-encoded) sigma factor is associated with the core the holoenzyme is formed, which can initiate transcription.

It localises to the plastid. It is found in the chloroplast. The catalysed reaction is RNA(n) + a ribonucleoside 5'-triphosphate = RNA(n+1) + diphosphate. DNA-dependent RNA polymerase catalyzes the transcription of DNA into RNA using the four ribonucleoside triphosphates as substrates. The protein is DNA-directed RNA polymerase subunit beta of Solanum tuberosum (Potato).